We begin with the raw amino-acid sequence, 411 residues long: Protein Rv3035 (411 aa).

The sequence is that of Protein Rv3035 from Mycobacterium tuberculosis (strain ATCC 25618 / H37Rv).